We begin with the raw amino-acid sequence, 223 residues long: Adenine phosphoribosyltransferase (223 aa).

This sequence belongs to the purine/pyrimidine phosphoribosyltransferase family. In terms of assembly, homodimer.

The protein localises to the cytoplasm. It catalyses the reaction AMP + diphosphate = 5-phospho-alpha-D-ribose 1-diphosphate + adenine. Its pathway is purine metabolism; AMP biosynthesis via salvage pathway; AMP from adenine: step 1/1. Functionally, catalyzes a salvage reaction resulting in the formation of AMP, that is energically less costly than de novo synthesis. This is Adenine phosphoribosyltransferase from Mycobacterium bovis (strain ATCC BAA-935 / AF2122/97).